Consider the following 178-residue polypeptide: Small ribosomal subunit protein bS16 (178 aa).

The tract at residues K78–A178 is disordered. The segment covering K91–R113 has biased composition (basic and acidic residues). Over residues A114 to E127 the composition is skewed to low complexity. The span at A128–A139 shows a compositional bias: acidic residues. Positions A140–A172 are enriched in low complexity.

Belongs to the bacterial ribosomal protein bS16 family.

The polypeptide is Small ribosomal subunit protein bS16 (Phenylobacterium zucineum (strain HLK1)).